The chain runs to 34 residues: MSDIN-like toxin proprotein 3 (34 aa).

A propeptide spanning residues 1-10 (MSDINTARLP) is cleaved from the precursor. Positions 11-20 (FFQPPEFRPP) form a cross-link, cyclopeptide (Phe-Pro). Residues 21–34 (CVGDDIEMVLTRGE) constitute a propeptide that is removed on maturation.

This sequence belongs to the MSDIN fungal toxin family. Processed by the macrocyclase-peptidase enzyme POPB to yield a toxic cyclic decapeptide. POPB first removes 10 residues from the N-terminus. Conformational trapping of the remaining peptide forces the enzyme to release this intermediate rather than proceed to macrocyclization. The enzyme rebinds the remaining peptide in a different conformation and catalyzes macrocyclization of the N-terminal 10 residues.

Probable toxin that belongs to the MSDIN-like toxin family responsible for a large number of food poisoning cases and deaths. The protein is MSDIN-like toxin proprotein 3 of Amanita bisporigera (Destroying angel).